Reading from the N-terminus, the 344-residue chain is Interferon gamma receptor 1-like (344 aa).

The signal sequence occupies residues 1–22; it reads MSKHAVVQFGVVYALLFPGVFG. Topologically, residues 23-229 are extracellular; that stretch reads FVPSPTNVSV…QPTPETDKTG (207 aa). The Fibronectin type-III domain maps to 24–102; that stretch reads VPSPTNVSVV…TAHDGQEKSE (79 aa). N-linked (GlcNAc...) asparagine glycosylation is found at Asn-29, Asn-44, Asn-132, and Asn-189. The helical transmembrane segment at 230–250 threads the bilayer; sequence IIAALIGGATVVLFIIMGFVW. Topologically, residues 251 to 344 are cytoplasmic; that stretch reads LLWRKWSNIP…SSDYDRPKFL (94 aa). A disordered region spans residues 300–344; it reads TEEDQSVSARDDTGADPPVVSEEGMAGEDSQGLGCSSDYDRPKFL.

It belongs to the type II cytokine receptor family. In terms of tissue distribution, highly expressed in brain. Also detected in spleen, heart, intestine, gill and kidney. In immune cell populations, detected at low levels in monocytes, peripheral blood leukocytes, splenocytes, neutrophils and mature macrophages.

Its subcellular location is the cell membrane. In terms of biological role, receptor which shows binding specificity for the cytokine ifng1 (interferon gamma 1). In Carassius auratus (Goldfish), this protein is Interferon gamma receptor 1-like.